We begin with the raw amino-acid sequence, 410 residues long: Cell division protein FtsZ (410 aa).

Residues 22–26 (GGGGN), 109–111 (GTG), E140, R144, and D188 each bind GTP. The interval 318–410 (ESKKDRKPHR…STPPFFRRKR (93 aa)) is disordered. Over residues 330-344 (RQAVQPMQQTTQSVE) the composition is skewed to polar residues. Positions 360-398 (WDIRREQNTRPKVDESSLEQVDKKEFDTFHREEPNHNDD) are enriched in basic and acidic residues.

The protein belongs to the FtsZ family. As to quaternary structure, homodimer. Polymerizes to form a dynamic ring structure in a strictly GTP-dependent manner. Interacts directly with several other division proteins.

The protein localises to the cytoplasm. Functionally, essential cell division protein that forms a contractile ring structure (Z ring) at the future cell division site. The regulation of the ring assembly controls the timing and the location of cell division. One of the functions of the FtsZ ring is to recruit other cell division proteins to the septum to produce a new cell wall between the dividing cells. Binds GTP and shows GTPase activity. This chain is Cell division protein FtsZ, found in Enterococcus faecalis (strain ATCC 700802 / V583).